A 324-amino-acid polypeptide reads, in one-letter code: MDQSNMTSLAEEKAMNTSSRNASLGSSHPPIPIVHWVIMSISPLGFVENGILLWFLCFRMRRNPFTVYITHLSIADISLLFCIFILSIDYALDYELSSGHHYTIVTLSVTFLFGYNTGLYLLTAISVERCLSVLYPIWYRCHRPKHQSAFVCALLWALSCLVTTMEYVMCIDSGEESHSRSDCRAVIIFIAILSFLVFTPLMLVSSTILVVKIRKNTWASHSSKLYIVIMVTIIIFLIFAMPMRVLYLLYYEYWSAFGNLHNISLLFSTINSSANPFIYFFVGSSKKKRFRESLKVVLTRAFKDEMQPRRQEGNGNTVSIETVV.

Over 1–35 (MDQSNMTSLAEEKAMNTSSRNASLGSSHPPIPIVH) the chain is Extracellular. N5, N16, and N21 each carry an N-linked (GlcNAc...) asparagine glycan. A helical transmembrane segment spans residues 36 to 60 (WVIMSISPLGFVENGILLWFLCFRM). At 61 to 64 (RRNP) the chain is on the cytoplasmic side. Residues 65–86 (FTVYITHLSIADISLLFCIFIL) traverse the membrane as a helical segment. The Extracellular portion of the chain corresponds to 87-103 (SIDYALDYELSSGHHYT). A helical membrane pass occupies residues 104–127 (IVTLSVTFLFGYNTGLYLLTAISV). The Cytoplasmic portion of the chain corresponds to 128-148 (ERCLSVLYPIWYRCHRPKHQS). A helical membrane pass occupies residues 149–171 (AFVCALLWALSCLVTTMEYVMCI). Residues 172–184 (DSGEESHSRSDCR) are Extracellular-facing. The chain crosses the membrane as a helical span at residues 185–205 (AVIIFIAILSFLVFTPLMLVS). Residues 206-223 (STILVVKIRKNTWASHSS) are Cytoplasmic-facing. The helical transmembrane segment at 224 to 244 (KLYIVIMVTIIIFLIFAMPMR) threads the bilayer. Over 245–262 (VLYLLYYEYWSAFGNLHN) the chain is Extracellular. The helical transmembrane segment at 263–283 (ISLLFSTINSSANPFIYFFVG) threads the bilayer. The Cytoplasmic segment spans residues 284-324 (SSKKKRFRESLKVVLTRAFKDEMQPRRQEGNGNTVSIETVV).

It belongs to the G-protein coupled receptor 1 family. In terms of assembly, interacts with AGTR1. Interacts with FLNA (via filamin repeat 21); increases PKA-mediated phosphorylation of FLNA.

It is found in the cell membrane. Acts specifically as a functional antagonist of AGTR1 (angiotensin-2 type 1 receptor), although it up-regulates AGTR1 receptor levels. Positive regulation of AGTR1 levels occurs through activation of the G-proteins GNA11 and GNAQ, and stimulation of the protein kinase C signaling cascade. The antagonist effect on AGTR1 function is probably due to AGTR1 being physically altered by MAS1. Receptor for angiotensin 1-7. This Mus musculus (Mouse) protein is Proto-oncogene Mas (Mas1).